We begin with the raw amino-acid sequence, 241 residues long: uncharacterized protein (241 aa).

Residues 19 to 53 are disordered; sequence KRIGYGMGEKSSAGSSRDQTYSVKPASDVKDKKKV. Polar residues predominate over residues 30–39; the sequence is SAGSSRDQTY.

This is an uncharacterized protein from Ostreid herpesvirus 1 (isolate France) (OsHV-1).